We begin with the raw amino-acid sequence, 294 residues long: Acetylglutamate kinase (294 aa).

Residues 63-64, arginine 85, and asparagine 188 contribute to the substrate site; that span reads GG.

It belongs to the acetylglutamate kinase family. ArgB subfamily.

The protein resides in the cytoplasm. The enzyme catalyses N-acetyl-L-glutamate + ATP = N-acetyl-L-glutamyl 5-phosphate + ADP. Its pathway is amino-acid biosynthesis; L-arginine biosynthesis; N(2)-acetyl-L-ornithine from L-glutamate: step 2/4. Functionally, catalyzes the ATP-dependent phosphorylation of N-acetyl-L-glutamate. This Methanococcus maripaludis (strain C5 / ATCC BAA-1333) protein is Acetylglutamate kinase.